We begin with the raw amino-acid sequence, 296 residues long: Probable AP endonuclease (296 aa).

Cysteine 16 and cysteine 20 are disulfide-bonded. Zn(2+) contacts are provided by histidine 78, histidine 115, glutamate 142, histidine 182, histidine 218, aspartate 231, histidine 233, and glutamate 271.

It belongs to the AP endonuclease 2 family. It depends on Zn(2+) as a cofactor.

It is found in the host nucleus. Its subcellular location is the host cytoplasm. The protein localises to the virion. Functionally, endonuclease that plays a role in DNA repair. Cleaves phosphodiester bonds on the 5' side of apurinic or apyrimidinic sites (AP sites). In addition to endonuclease activity, the ASFV enzyme has a proofreading 3'-5' exonuclease activity that is considerably more efficient in the elimination of a mismatch than in that of a correctly paired base. Displays 3'-phosphatase and 3'-repair diesterase activities. The single nucleotide gaps generated by the AP endonuclease are filled by the viral AP endonuclease and DNA ligase. In Ornithodoros (relapsing fever ticks), this protein is Probable AP endonuclease.